Here is a 235-residue protein sequence, read N- to C-terminus: Golgi to ER traffic protein 1 (235 aa).

Position 1 (methionine 1) is a topological domain, lumenal. Residues 2–21 traverse the membrane as a helical segment; that stretch reads HWAAAVAIFFIVVTKFLQYT. Residues 22 to 104 are Cytoplasmic-facing; sequence NKYHEKWISK…AFQAHLHKLR (83 aa). Residues 68–104 adopt a coiled-coil conformation; sequence WTKNNRKLDSLDKEINNLKDEIQSENKAFQAHLHKLR. Residues 105-125 traverse the membrane as a helical segment; the sequence is LLALTVPFFVFKIMYGKTPVY. The Lumenal portion of the chain corresponds to 126–181; the sequence is KLSSSTSTLFPTFVSGVWSQGWLYVLLHPLRTISQKWHIMEGKFGASKFDDMALQS. The chain crosses the membrane as a helical span at residues 182–198; it reads VSLGIWVWALMNVINGV. Residues 199 to 235 are Cytoplasmic-facing; it reads EFIVKQLFLTPKMEAPASVETQEEKALDAVDDAIILD.

It belongs to the WRB/GET1 family. In terms of assembly, component of the Golgi to ER traffic (GET) complex, which is composed of GET1, GET2 and GET3. Within the complex, GET1 and GET2 form a heterotetramer which is stabilized by phosphatidylinositol binding and which binds to the GET3 homodimer.

It localises to the endoplasmic reticulum membrane. The protein localises to the golgi apparatus membrane. In terms of biological role, required for the post-translational delivery of tail-anchored (TA) proteins to the endoplasmic reticulum. Together with GET2, acts as a membrane receptor for soluble GET3, which recognizes and selectively binds the transmembrane domain of TA proteins in the cytosol. The GET complex cooperates with the HDEL receptor ERD2 to mediate the ATP-dependent retrieval of resident ER proteins that contain a C-terminal H-D-E-L retention signal from the Golgi to the ER. This Saccharomyces cerevisiae (strain RM11-1a) (Baker's yeast) protein is Golgi to ER traffic protein 1.